The chain runs to 187 residues: UPF0669 protein C6orf120 homolog (187 aa).

The signal sequence occupies residues 1–23 (MVEYWKRNFFMVLVLQAFYLANC). The N-linked (GlcNAc...) asparagine glycan is linked to N47.

The protein belongs to the UPF0669 family.

It localises to the secreted. This chain is UPF0669 protein C6orf120 homolog, found in Xenopus tropicalis (Western clawed frog).